The sequence spans 670 residues: Protein angel homolog 1 (670 aa).

Residues serine 77 and serine 105 each carry the phosphoserine modification.

It belongs to the CCR4/nocturin family.

This chain is Protein angel homolog 1 (ANGEL1), found in Homo sapiens (Human).